We begin with the raw amino-acid sequence, 339 residues long: Phenylalanine--tRNA ligase alpha subunit (339 aa).

Mg(2+) is bound at residue Glu247.

It belongs to the class-II aminoacyl-tRNA synthetase family. Phe-tRNA synthetase alpha subunit type 1 subfamily. Tetramer of two alpha and two beta subunits. Mg(2+) serves as cofactor.

It is found in the cytoplasm. It catalyses the reaction tRNA(Phe) + L-phenylalanine + ATP = L-phenylalanyl-tRNA(Phe) + AMP + diphosphate + H(+). The protein is Phenylalanine--tRNA ligase alpha subunit of Deinococcus deserti (strain DSM 17065 / CIP 109153 / LMG 22923 / VCD115).